Here is a 224-residue protein sequence, read N- to C-terminus: N-terminal Xaa-Pro-Lys N-methyltransferase 1 (224 aa).

S-adenosyl-L-methionine contacts are provided by residues Gly70, Arg75, 92 to 94, 120 to 121, and Gln136; these read DVT and LQ.

Belongs to the methyltransferase superfamily. NTM1 family.

Its subcellular location is the nucleus. The catalysed reaction is N-terminal L-alanyl-L-prolyl-L-lysyl-[protein] + 3 S-adenosyl-L-methionine = N-terminal N,N,N-trimethyl-L-alanyl-L-prolyl-L-lysyl-[protein] + 3 S-adenosyl-L-homocysteine + 3 H(+). The enzyme catalyses N-terminal L-seryl-L-prolyl-L-lysyl-[protein] + 3 S-adenosyl-L-methionine = N-terminal N,N,N-trimethyl-L-seryl-L-prolyl-L-lysyl-[protein] + 3 S-adenosyl-L-homocysteine + 3 H(+). It carries out the reaction N-terminal L-prolyl-L-prolyl-L-lysyl-[protein] + 2 S-adenosyl-L-methionine = N-terminal N,N-dimethyl-L-prolyl-L-prolyl-L-lysyl-[protein] + 2 S-adenosyl-L-homocysteine + 2 H(+). Its function is as follows. Distributive alpha-N-methyltransferase that methylates the N-terminus of target proteins containing the N-terminal motif [Ala/Gly/Pro/Ser]-Pro-Lys when the initiator Met is cleaved. Specifically catalyzes mono-, di- or tri-methylation of the exposed alpha-amino group of the Ala, Gly or Ser residue in the [Ala/Gly/Ser]-Pro-Lys motif and mono- or di-methylation of Pro in the Pro-Pro-Lys motif. Required during mitosis for normal bipolar spindle formation and chromosome segregation via its action on target proteins. The chain is N-terminal Xaa-Pro-Lys N-methyltransferase 1 (ntmt1) from Xenopus tropicalis (Western clawed frog).